Reading from the N-terminus, the 474-residue chain is Ribulose bisphosphate carboxylase large chain (474 aa).

Substrate-binding residues include Asn122 and Thr172. The Proton acceptor role is filled by Lys174. Lys176 is a substrate binding site. The Mg(2+) site is built by Lys200, Asp202, and Glu203. Lys200 is modified (N6-carboxylysine). His293 serves as the catalytic Proton acceptor. Residues Arg294, His326, and Ser378 each coordinate substrate.

Belongs to the RuBisCO large chain family. Type I subfamily. Heterohexadecamer of 8 large chains and 8 small chains; disulfide-linked. The disulfide link is formed within the large subunit homodimers. Mg(2+) serves as cofactor. Post-translationally, the disulfide bond which can form in the large chain dimeric partners within the hexadecamer appears to be associated with oxidative stress and protein turnover.

It is found in the carboxysome. It carries out the reaction 2 (2R)-3-phosphoglycerate + 2 H(+) = D-ribulose 1,5-bisphosphate + CO2 + H2O. The catalysed reaction is D-ribulose 1,5-bisphosphate + O2 = 2-phosphoglycolate + (2R)-3-phosphoglycerate + 2 H(+). In terms of biological role, ruBisCO catalyzes two reactions: the carboxylation of D-ribulose 1,5-bisphosphate, the primary event in carbon dioxide fixation, as well as the oxidative fragmentation of the pentose substrate in the photorespiration process. Both reactions occur simultaneously and in competition at the same active site. The sequence is that of Ribulose bisphosphate carboxylase large chain from Gloeobacter violaceus (strain ATCC 29082 / PCC 7421).